The chain runs to 149 residues: Ribonuclease VapC2 (149 aa).

Positions 11–149 (IFFDSNILIY…RVDFLEIIEI (139 aa)) constitute a PINc domain. Mg(2+) contacts are provided by Asp14 and Asp116.

Belongs to the PINc/VapC protein family. Mg(2+) serves as cofactor.

Functionally, toxic component of a type II toxin-antitoxin (TA) system. An RNase. Its cognate antitoxin is VapB2. This is Ribonuclease VapC2 from Methanocaldococcus jannaschii (strain ATCC 43067 / DSM 2661 / JAL-1 / JCM 10045 / NBRC 100440) (Methanococcus jannaschii).